Here is a 404-residue protein sequence, read N- to C-terminus: Growth/differentiation factor 6-A (404 aa).

A signal peptide spans 1 to 24 (MDALRAVAFYALFVFLWSLPCCQS). A propeptide spanning residues 25-284 (AALISQKRSK…LQFKARRRRR (260 aa)) is cleaved from the precursor. Residue Asn-91 is glycosylated (N-linked (GlcNAc...) asparagine). The disordered stretch occupies residues 263-304 (KSRGDDDEEESALQFKARRRRRTALNNRHGKRHGKKSKSRCS). The span at 278–304 (KARRRRRTALNNRHGKRHGKKSKSRCS) shows a compositional bias: basic residues. 3 cysteine pairs are disulfide-bonded: Cys-303-Cys-369, Cys-332-Cys-401, and Cys-336-Cys-403.

The protein belongs to the TGF-beta family. In terms of assembly, homodimer; disulfide-linked. First expressed in late gastrula stage embryos (9.5 hours post fertilization (hpf)) in anterior neuroectoderm corresponding to the future dorsal part of the brain. Shortly after tailbud formation (11 hpf), expression expands to the entire neural region and is subsequently expressed in derivatives of the lateral neural plate and migrating neural crest cells, with the future midbrain and hindbrain showing strong expression. Also expressed weakly and transiently in the posterior embryo from 11.5 hpf to 15 hpf in the lateral mesoderm, and in ectoderm above the neural keel. At 14 hpf, expressed along the entire length of the embryo and starting around the 16-somite stage, expressed in the dorsal quadrant of the retina, representing the distal tip of the eye anlage. At this stage, also expressed in the hatching gland and the hypochord. At 24 hpf, expressed in the roof plate outlining the fourth brain ventricle, in the posterior hypochord, the primitive gut endoderm, the ventral tail mesenchyme, the dorsal part of the neural tube and the dorsal fin. Weakly expressed in the dorsal part of the posterior spinal cord and in blood cell precursors.

It localises to the secreted. Its function is as follows. Growth factor that controls proliferation and cellular differentiation in the retina. Plays a key role in regulating apoptosis during retinal development. Establishes dorsal-ventral positional information in the retina and controls the formation of the retinotectal map. Functions maternally in dorsal/ventral patterning to induce the expression of the zygotic bmp2b and bmp4 genes and ventralize embryos. Zygotic expression does not appear to regulate axis specification, but instead functions to establish the integrity of the axial vessels during embryonic development. May be involved in maintaining the identity of cells of the dorsal-most neural tube and of at least a subset of neural crest cells. In Danio rerio (Zebrafish), this protein is Growth/differentiation factor 6-A (gdf6a).